A 65-amino-acid polypeptide reads, in one-letter code: UPF0434 protein Mmwyl1_2153 (65 aa).

It belongs to the UPF0434 family.

This is UPF0434 protein Mmwyl1_2153 from Marinomonas sp. (strain MWYL1).